Reading from the N-terminus, the 58-residue chain is Protein SHMOOSE (58 aa).

Residues 27 to 58 (FGATPNKSNNHAHYYNHPNPDFPNSPHPYHPR) are disordered. Residues 35-45 (NNHAHYYNHPN) are compositionally biased toward low complexity. Pro residues predominate over residues 46–58 (PDFPNSPHPYHPR).

Interacts with IMMT/mitofilin. In terms of tissue distribution, detected in cerebrospinal fluid (at protein level).

The protein resides in the mitochondrion. It localises to the nucleus. Functionally, increases neural cell metabolic activity and mitochondrial oxygen consumption rate. This is Protein SHMOOSE from Homo sapiens (Human).